The sequence spans 1387 residues: DNA-directed RNA polymerase subunit beta (1387 aa).

It belongs to the RNA polymerase beta chain family. In terms of assembly, the RNAP catalytic core consists of 2 alpha, 1 beta, 1 beta' and 1 omega subunit. When a sigma factor is associated with the core the holoenzyme is formed, which can initiate transcription.

It catalyses the reaction RNA(n) + a ribonucleoside 5'-triphosphate = RNA(n+1) + diphosphate. Its function is as follows. DNA-dependent RNA polymerase catalyzes the transcription of DNA into RNA using the four ribonucleoside triphosphates as substrates. The protein is DNA-directed RNA polymerase subunit beta of Xanthomonas campestris pv. campestris (strain 8004).